The primary structure comprises 659 residues: MAATTTTTNAGRSMASWKRLSTLIAAFTLSWTSSFVAAAGSADYFVHDLPGAPDGPLVKMHAGHIEVTPDNNGNLFFWHFQNKHIANKQRTVIWLNGGPGCSSEDGALMEIGPYRLKDENTLVYNDGAWNEFANVLFVDNPVGTGFSYVDTNAYIHELTEMAANFVTFLERWFALFPEYEHDDLYIAGESYAGQHIPYIAQAILERNKNAGPVNRKWNLSGLLIGNGWVSPKEQYDAYLQFAYEKDIVKKGTDLANKLEIQQRICQKEIAVKPDKIDYPECEAILQDMLQLTAGGVGASGKNQCYNMYDVRLKDDYPSCGMAWPPDLKSVTPYLRKKEVIKALNINDNKSTGWTECNGQVGMNFNPKTKPSITLLPDILSAGVPILLFSGAEDLICNHLGTEALISNMEWNGGKGFELTPGTWAPRRDWTFEGEPAGFWQQARNLTYVLFYNSSHMVPFDYPRRTRDMLDRFMGVDISSIGGQPTDSRLDGEKLPETTVGGAAGNSTSNQAAEKAKLEMAKWEAYRKSGELVLVIVIVAAGVWGWFVWKERRKTAGQGYMGVATGERHSISNNPGPRGNLSGGGDRTRGQGLAGFRNKRSGRRDVEAQDFDESELDDLHLSKPEDPHADSRYSIGGASDDEEEQKPGKGSSSRQPGGRS.

A signal peptide spans 1-38 (MAATTTTTNAGRSMASWKRLSTLIAAFTLSWTSSFVAA). Residues 39-527 (AGSADYFVHD…EMAKWEAYRK (489 aa)) are Lumenal-facing. The active site involves Ser190. N-linked (GlcNAc...) asparagine glycosylation is found at Asn218 and Asn348. Residue Asp393 is part of the active site. N-linked (GlcNAc...) asparagine glycosylation is found at Asn444 and Asn452. The active site involves His455. The interval 480 to 507 (IGGQPTDSRLDGEKLPETTVGGAAGNST) is disordered. Residue Asn505 is glycosylated (N-linked (GlcNAc...) asparagine). The helical transmembrane segment at 528-548 (SGELVLVIVIVAAGVWGWFVW) threads the bilayer. Residues 549-659 (KERRKTAGQG…SSSRQPGGRS (111 aa)) lie on the Cytoplasmic side of the membrane. The tract at residues 565-659 (GERHSISNNP…SSSRQPGGRS (95 aa)) is disordered. Basic and acidic residues predominate over residues 616 to 630 (DDLHLSKPEDPHADS). Positions 649–659 (GSSSRQPGGRS) are enriched in polar residues.

It belongs to the peptidase S10 family.

The protein localises to the golgi apparatus. The protein resides in the trans-Golgi network membrane. It catalyses the reaction Preferential release of a C-terminal arginine or lysine residue.. Protease with a carboxypeptidase B-like function involved in the C-terminal processing of the lysine and arginine residues from protein precursors. Promotes cell fusion and is involved in the programmed cell death. This chain is Pheromone-processing carboxypeptidase kex1 (kex1), found in Neurospora crassa (strain ATCC 24698 / 74-OR23-1A / CBS 708.71 / DSM 1257 / FGSC 987).